The sequence spans 117 residues: Acylphosphatase (117 aa).

In terms of domain architecture, Acylphosphatase-like spans 31–117 (RWRWIIQGQV…RGDDWFEVRY (87 aa)). Residues Arg-46 and Asn-64 contribute to the active site.

Belongs to the acylphosphatase family.

The enzyme catalyses an acyl phosphate + H2O = a carboxylate + phosphate + H(+). This chain is Acylphosphatase (acyP), found in Synechococcus sp. (strain CC9902).